Here is a 193-residue protein sequence, read N- to C-terminus: Rho-related GTP-binding protein RhoC (193 aa).

12 to 19 (GDGACGKT) lines the GTP pocket. An Effector region motif is present at residues 34 to 42 (YVPTVFENY). Position 41 is an ADP-ribosylasparagine; by botulinum toxin (asparagine 41). GTP is bound by residues 59–63 (DTAGQ) and 117–120 (NKKD). Cysteine 190 is subject to Cysteine methyl ester. A lipid anchor (S-geranylgeranyl cysteine) is attached at cysteine 190. The propeptide at 191–193 (PLL) is removed in mature form.

It belongs to the small GTPase superfamily. Rho family.

The protein localises to the cell membrane. It is found in the cleavage furrow. Regulates a signal transduction pathway linking plasma membrane receptors to the assembly of focal adhesions and actin stress fibers. Serves as a microtubule-dependent signal that is required for the myosin contractile ring formation during cell cycle cytokinesis. Regulates apical junction formation in bronchial epithelial cells. This Gallus gallus (Chicken) protein is Rho-related GTP-binding protein RhoC (RHOC).